The primary structure comprises 445 residues: Glycine--tRNA ligase (445 aa).

Substrate contacts are provided by lysine 97 and glutamate 145. Residues 177-179 (RNE), 187-192 (FRTCEF), 262-263 (EI), and 308-311 (GLTR) contribute to the ATP site. 192-196 (FEQME) contacts substrate. A substrate-binding site is contributed by 304–308 (ETSLG).

This sequence belongs to the class-II aminoacyl-tRNA synthetase family. Homodimer.

It is found in the cytoplasm. The enzyme catalyses tRNA(Gly) + glycine + ATP = glycyl-tRNA(Gly) + AMP + diphosphate. In terms of biological role, catalyzes the attachment of glycine to tRNA(Gly). The protein is Glycine--tRNA ligase of Borrelia hermsii (strain HS1 / DAH).